The following is a 141-amino-acid chain: VLSPADKTNVKSTWDKIGGHAGEYGGEALERTFASFPTTKTYFPHFDLSHGSAQVKAHGKKVADALTNAVAHMDDLPGALSALSDLHAYKLRVDPVNFKLLSHCLLVTLACHHPAEFTPAVHASLDKFFSAVSTVLTSKYR.

The region spanning 1 to 141 (VLSPADKTNV…VSTVLTSKYR (141 aa)) is the Globin domain. S3 is modified (phosphoserine). K7 bears the N6-succinyllysine mark. Residue T8 is modified to Phosphothreonine. The residue at position 11 (K11) is an N6-succinyllysine. The residue at position 16 (K16) is an N6-acetyllysine; alternate. The residue at position 16 (K16) is an N6-succinyllysine; alternate. Y24 is subject to Phosphotyrosine. Phosphoserine is present on S35. The residue at position 40 (K40) is an N6-succinyllysine. A Phosphoserine modification is found at S49. H58 contributes to the O2 binding site. H87 provides a ligand contact to heme b. S102 carries the post-translational modification Phosphoserine. A Phosphothreonine modification is found at T108. Residue S124 is modified to Phosphoserine. 2 positions are modified to phosphothreonine: T134 and T137. Phosphoserine is present on S138.

This sequence belongs to the globin family. As to quaternary structure, heterotetramer of two alpha chains and two beta chains. Red blood cells.

Its function is as follows. Involved in oxygen transport from the lung to the various peripheral tissues. This Mustela putorius (European polecat) protein is Hemoglobin subunit alpha-1/2.